Here is a 235-residue protein sequence, read N- to C-terminus: Leucyl/phenylalanyl-tRNA--protein transferase (235 aa).

The protein belongs to the L/F-transferase family.

The protein localises to the cytoplasm. It catalyses the reaction N-terminal L-lysyl-[protein] + L-leucyl-tRNA(Leu) = N-terminal L-leucyl-L-lysyl-[protein] + tRNA(Leu) + H(+). The catalysed reaction is N-terminal L-arginyl-[protein] + L-leucyl-tRNA(Leu) = N-terminal L-leucyl-L-arginyl-[protein] + tRNA(Leu) + H(+). The enzyme catalyses L-phenylalanyl-tRNA(Phe) + an N-terminal L-alpha-aminoacyl-[protein] = an N-terminal L-phenylalanyl-L-alpha-aminoacyl-[protein] + tRNA(Phe). Its function is as follows. Functions in the N-end rule pathway of protein degradation where it conjugates Leu, Phe and, less efficiently, Met from aminoacyl-tRNAs to the N-termini of proteins containing an N-terminal arginine or lysine. The chain is Leucyl/phenylalanyl-tRNA--protein transferase from Methylococcus capsulatus (strain ATCC 33009 / NCIMB 11132 / Bath).